A 256-amino-acid chain; its full sequence is Type III pantothenate kinase (256 aa).

Residue 6–13 (DVGNSHIY) coordinates ATP. Substrate contacts are provided by residues Y99 and 106 to 109 (GADR). D108 (proton acceptor) is an active-site residue. Residue D129 participates in K(+) binding. T132 is a binding site for ATP. T184 provides a ligand contact to substrate.

The protein belongs to the type III pantothenate kinase family. Homodimer. It depends on NH4(+) as a cofactor. K(+) is required as a cofactor.

Its subcellular location is the cytoplasm. It carries out the reaction (R)-pantothenate + ATP = (R)-4'-phosphopantothenate + ADP + H(+). The protein operates within cofactor biosynthesis; coenzyme A biosynthesis; CoA from (R)-pantothenate: step 1/5. In terms of biological role, catalyzes the phosphorylation of pantothenate (Pan), the first step in CoA biosynthesis. This chain is Type III pantothenate kinase, found in Legionella pneumophila (strain Corby).